The primary structure comprises 214 residues: Protein OPG176 (214 aa).

Belongs to the orthopoxvirus OPG176 family. In terms of assembly, tetramer. Interacts with host MYD88, TRF4, TICAM2 and MAL.

BCL2-like protein which disrupts the host immune response by inhibiting the TLR4 signaling pathway leading to NF-kappa-B activation. Acts close to the plasma membrane and targets several host TIR-domain containing adapter proteins including MYD88, TIRAP, TRIF and TICAM2. In turn, blocks the host NF-kappa-B and TRIF-mediated IRF3 activation. This is Protein OPG176 (OPG176) from Homo sapiens (Human).